Consider the following 547-residue polypeptide: CAP-Gly domain-containing linker protein 3 (547 aa).

Residues 1–49 (MTKTDPAPMAPPPRGEEEEEEEEDEPVPEAPSPTQERRQKPVVHPSAPA) form a disordered region. A compositionally biased stretch (acidic residues) spans 16-27 (EEEEEEEEDEPV). ANK repeat units follow at residues 117–158 (TDMT…LRSR), 160–191 (TNMNALHYAAYFDVPDLVRVLLKGARPRVVNS), and 197–229 (NHGSALHIAASNLCLGAAKCLLEHGANPALRNR). Residues 314–356 (GTTEFASGQWVGVELDEPEGKNDGSVGGVRYFICPPKQGLFAS) enclose the CAP-Gly 1 domain. The disordered stretch occupies residues 365–413 (DAPPSSVTSTPRTPRMDFSRVTGKGRREHKGKKKSPSSPSLGSLQQREG). A compositionally biased stretch (low complexity) spans 367–377 (PPSSVTSTPRT). Phosphothreonine is present on Thr374. Residues 387 to 399 (GKGRREHKGKKKS) show a composition bias toward basic residues. Phosphoserine occurs at positions 399 and 401. Positions 436-478 (GKTDFAPGYWYGIELDQPTGKHDGSVFGVRYFTCAPRHGVFAP) constitute a CAP-Gly 2 domain. Residues 488–547 (STDPPGDSVGAKKVHQVTMTQPKRTFTTVRTPKDIASENSISRLLFCCWFPWMLRAEMQS) are goLD. Residues Cys534 and Cys535 are each lipidated (S-palmitoyl cysteine).

Homodimer. Interacts with AKT1 and AKT2; when AKT1 and AKT2 are phosphorylated and activated, affinity is higher for AKT2. Interacts with ZDHHC13 (via ANK repeats). Interacts with ZDHHC17 (via ANK repeats). In terms of processing, palmitoylation by ZDHHC17 regulates association with the plasma membrane.

It localises to the cell membrane. It is found in the cytoplasm. The protein resides in the golgi apparatus. The protein localises to the golgi stack. Its function is as follows. Functions as a cytoplasmic linker protein. Involved in TGN-endosome dynamics. May modulate the cellular compartmentalization of AKT kinase family and promote its cell membrane localization, thereby playing a role in glucose transport in adipocytes. This is CAP-Gly domain-containing linker protein 3 (Clip3) from Mus musculus (Mouse).